The sequence spans 86 residues: Small ribosomal subunit protein uS17 (86 aa).

This sequence belongs to the universal ribosomal protein uS17 family. In terms of assembly, part of the 30S ribosomal subunit.

One of the primary rRNA binding proteins, it binds specifically to the 5'-end of 16S ribosomal RNA. This Shouchella clausii (strain KSM-K16) (Alkalihalobacillus clausii) protein is Small ribosomal subunit protein uS17.